The chain runs to 285 residues: Octanoyltransferase (285 aa).

Residues 50–277 (LRTPDELWIV…NIAQRHAGDI (228 aa)) enclose the BPL/LPL catalytic domain. Substrate is bound by residues 89-96 (RGGQVTWH), 189-191 (SLG), and 202-204 (GIA). Cys220 acts as the Acyl-thioester intermediate in catalysis.

This sequence belongs to the LipB family.

It localises to the cytoplasm. It carries out the reaction octanoyl-[ACP] + L-lysyl-[protein] = N(6)-octanoyl-L-lysyl-[protein] + holo-[ACP] + H(+). It participates in protein modification; protein lipoylation via endogenous pathway; protein N(6)-(lipoyl)lysine from octanoyl-[acyl-carrier-protein]: step 1/2. Its function is as follows. Catalyzes the transfer of endogenously produced octanoic acid from octanoyl-acyl-carrier-protein onto the lipoyl domains of lipoate-dependent enzymes. Lipoyl-ACP can also act as a substrate although octanoyl-ACP is likely to be the physiological substrate. This chain is Octanoyltransferase, found in Psychrobacter cryohalolentis (strain ATCC BAA-1226 / DSM 17306 / VKM B-2378 / K5).